The following is a 327-amino-acid chain: Microtubule-associated protein RP/EB family member 2 (327 aa).

Positions methionine 1 to aspartate 21 are disordered. Serine 9 is modified (phosphoserine). The Calponin-homology (CH) domain maps to threonine 57–aspartate 159. A Phosphotyrosine modification is found at tyrosine 167. Disordered stretches follow at residues glutamate 171–leucine 240 and alanine 299–tyrosine 327. A DCTN1-binding region spans residues glutamine 187–tyrosine 327. Residues serine 200–serine 234 are compositionally biased toward low complexity. Serine 219 is modified (phosphoserine). An EB1 C-terminal domain is found at serine 236–histidine 306. The interval glutamate 259–glutamate 302 is APC-binding. Residues serine 300–histidine 317 are compositionally biased toward basic and acidic residues. The segment covering glutamate 318 to tyrosine 327 has biased composition (low complexity).

Belongs to the MAPRE family. As to quaternary structure, interacts with DCTN1. Interacts with APC (via C-terminal). Interacts with monomeric and polymerized tubulin. Interacts with SLAIN1. Interacts (via the N-terminal region) with BAG1.

It localises to the cytoplasm. It is found in the cytoskeleton. Its function is as follows. May be involved in microtubule polymerization, and spindle function by stabilizing microtubules and anchoring them at centrosomes. May play a role in cell migration. In Pongo abelii (Sumatran orangutan), this protein is Microtubule-associated protein RP/EB family member 2 (MAPRE2).